The chain runs to 295 residues: Protoheme IX farnesyltransferase (295 aa).

7 helical membrane-spanning segments follow: residues 43–63 (PIQL…VAAL), 92–112 (SAFV…YALV), 114–134 (PLAA…YTPA), 140–160 (WSTE…WSAG), 166–186 (ALGW…FMAV), 231–251 (LLWG…GLWF), and 272–292 (FFAS…DRLF).

It belongs to the UbiA prenyltransferase family. Protoheme IX farnesyltransferase subfamily.

It is found in the cell inner membrane. The catalysed reaction is heme b + (2E,6E)-farnesyl diphosphate + H2O = Fe(II)-heme o + diphosphate. Its pathway is porphyrin-containing compound metabolism; heme O biosynthesis; heme O from protoheme: step 1/1. Its function is as follows. Converts heme B (protoheme IX) to heme O by substitution of the vinyl group on carbon 2 of heme B porphyrin ring with a hydroxyethyl farnesyl side group. The polypeptide is Protoheme IX farnesyltransferase (Opitutus terrae (strain DSM 11246 / JCM 15787 / PB90-1)).